The following is a 1519-amino-acid chain: Rho guanine nucleotide exchange factor 40 (1519 aa).

2 disordered regions span residues 194–237 (VGHQ…PVEG) and 253–503 (RGSP…LETV). A compositionally biased stretch (pro residues) spans 200 to 218 (TLPPELPSGPPGLPSPPLP). A Phosphoserine modification is found at serine 262. Residues 280–290 (KGRHRRHRAWM) are compositionally biased toward basic residues. Positions 314 to 341 (ASPESPPGAEAVPEAAVLEVSEPPAEAV) are enriched in low complexity. Residues 355–367 (LRGGGGGGQGAEG) show a composition bias toward gly residues. Threonine 371 is modified (phosphothreonine). Residues 374 to 386 (RTGKGNRRKKRAA) show a composition bias toward basic residues. Serine 419 carries the phosphoserine modification. The span at 421–457 (SEHKLPECHLVKEEYEGSGKPESEPKELKTAGEKEPQ) shows a compositional bias: basic and acidic residues. Residues 828-871 (SAEVQERLAQAREALALEENATSQKVLDIFEQRLEQVESGLHRA) are a coiled coil. Phosphoserine is present on residues serine 931 and serine 961. Positions 934–961 (ALREWGRCQARCQELERRIQQHVGEEAS) form a coiled coil. The disordered stretch occupies residues 955–1031 (HVGEEASPRG…ELAPEAEGRP (77 aa)). A compositionally biased stretch (low complexity) spans 980-996 (WGPRSPSPSLSSLLLPS). At serine 1082 the chain carries Phosphoserine. The DH domain occupies 1085–1253 (AQQRLVSELI…REQEARGRDL (169 aa)). Residues 1265–1372 (DLKEQGQLLH…WTSSIAQLLW (108 aa)) form the PH domain. A phosphoserine mark is found at serine 1433, serine 1438, and serine 1474. The segment at 1466 to 1519 (TLDSSGDVSPGPRNSPSLQPPHPGSSTPTLASRGILGLSRQSHARALSDPTTPL) is disordered. Polar residues predominate over residues 1467–1482 (LDSSGDVSPGPRNSPS). Threonine 1492 is modified (phosphothreonine).

As to expression, expressed at higher level in the central nervous system and skeletal muscle and greater abundance in fetal than adult brain (at protein level).

The protein resides in the cytoplasm. Functionally, may act as a guanine nucleotide exchange factor (GEF). This is Rho guanine nucleotide exchange factor 40 (ARHGEF40) from Homo sapiens (Human).